We begin with the raw amino-acid sequence, 344 residues long: Arginine N-succinyltransferase (344 aa).

A succinyl-CoA-binding site is contributed by L125. The active-site Proton donor is the H229.

The protein belongs to the arginine N-succinyltransferase family.

It carries out the reaction succinyl-CoA + L-arginine = N(2)-succinyl-L-arginine + CoA + H(+). The protein operates within amino-acid degradation; L-arginine degradation via AST pathway; L-glutamate and succinate from L-arginine: step 1/5. Catalyzes the transfer of succinyl-CoA to arginine to produce N(2)-succinylarginine. This is Arginine N-succinyltransferase from Shigella flexneri serotype 5b (strain 8401).